Reading from the N-terminus, the 205-residue chain is Holliday junction branch migration complex subunit RuvA (205 aa).

Residues 1-67 are domain I; that stretch reads MITSIFGKVT…QIIEEAFAFN (67 aa). A domain II region spans residues 68–146; sequence TLEEKEWFCR…NNKNIKGVQV (79 aa). The tract at residues 147–150 is flexible linker; it reads ADGY. The domain III stretch occupies residues 150–205; the sequence is YDELFETLKSLGYKQQEIQDALKMIEVKPDFDISQLVAEVIKLMSFKNNEITNKTA.

This sequence belongs to the RuvA family. Homotetramer. Forms an RuvA(8)-RuvB(12)-Holliday junction (HJ) complex. HJ DNA is sandwiched between 2 RuvA tetramers; dsDNA enters through RuvA and exits via RuvB. An RuvB hexamer assembles on each DNA strand where it exits the tetramer. Each RuvB hexamer is contacted by two RuvA subunits (via domain III) on 2 adjacent RuvB subunits; this complex drives branch migration. In the full resolvosome a probable DNA-RuvA(4)-RuvB(12)-RuvC(2) complex forms which resolves the HJ.

Its subcellular location is the cytoplasm. Its function is as follows. The RuvA-RuvB-RuvC complex processes Holliday junction (HJ) DNA during genetic recombination and DNA repair, while the RuvA-RuvB complex plays an important role in the rescue of blocked DNA replication forks via replication fork reversal (RFR). RuvA specifically binds to HJ cruciform DNA, conferring on it an open structure. The RuvB hexamer acts as an ATP-dependent pump, pulling dsDNA into and through the RuvAB complex. HJ branch migration allows RuvC to scan DNA until it finds its consensus sequence, where it cleaves and resolves the cruciform DNA. The chain is Holliday junction branch migration complex subunit RuvA from Mycoplasma genitalium (strain ATCC 33530 / DSM 19775 / NCTC 10195 / G37) (Mycoplasmoides genitalium).